The sequence spans 502 residues: RxLR effector protein BLN06 (502 aa).

A signal peptide spans Met-1–Ala-20. N-linked (GlcNAc...) asparagine glycosylation occurs at Asn-38. Residues Leu-50–Arg-53 carry the dEER motif.

The protein belongs to the RxLR effector family.

The protein resides in the secreted. Its subcellular location is the host cell membrane. Its function is as follows. Secreted effector that triggers a robust hypersensitive response (HR) in Lactuca serriola LS102. The response to BLN06 was visible as chlorosis but not as strong necrosis. This chain is RxLR effector protein BLN06, found in Bremia lactucae (Lettuce downy mildew).